The following is a 344-amino-acid chain: SUMO-activating enzyme subunit 1 (344 aa).

The protein belongs to the ubiquitin-activating E1 family. As to quaternary structure, heterodimer of sae1 and uba2/sae2. The heterodimer corresponds to the two domains that are encoded on a single polypeptide chain in ubiquitin-activating enzyme E1. Interacts with ube2i.

Its subcellular location is the nucleus. Its pathway is protein modification; protein sumoylation. In terms of biological role, the heterodimer acts as an E1 ligase for sumo1, sumo2, and sumo3. It mediates ATP-dependent activation of sumo proteins followed by formation of a thioester bond between a sumo protein and a conserved active site cysteine residue on uba2/sae2. In Xenopus laevis (African clawed frog), this protein is SUMO-activating enzyme subunit 1 (sae1).